The sequence spans 374 residues: Queuine tRNA-ribosyltransferase (374 aa).

Asp92 functions as the Proton acceptor in the catalytic mechanism. Residues 92 to 96, Asp146, Gln193, and Gly220 contribute to the substrate site; that span reads DSGGY. The interval 251–257 is RNA binding; the sequence is GVGKPDD. The active-site Nucleophile is Asp270. The RNA binding; important for wobble base 34 recognition stretch occupies residues 275 to 279; sequence TRSGR. Residues Cys308, Cys310, Cys313, and His339 each coordinate Zn(2+).

Belongs to the queuine tRNA-ribosyltransferase family. In terms of assembly, homodimer. Within each dimer, one monomer is responsible for RNA recognition and catalysis, while the other monomer binds to the replacement base PreQ1. The cofactor is Zn(2+).

It carries out the reaction 7-aminomethyl-7-carbaguanine + guanosine(34) in tRNA = 7-aminomethyl-7-carbaguanosine(34) in tRNA + guanine. Its pathway is tRNA modification; tRNA-queuosine biosynthesis. Catalyzes the base-exchange of a guanine (G) residue with the queuine precursor 7-aminomethyl-7-deazaguanine (PreQ1) at position 34 (anticodon wobble position) in tRNAs with GU(N) anticodons (tRNA-Asp, -Asn, -His and -Tyr). Catalysis occurs through a double-displacement mechanism. The nucleophile active site attacks the C1' of nucleotide 34 to detach the guanine base from the RNA, forming a covalent enzyme-RNA intermediate. The proton acceptor active site deprotonates the incoming PreQ1, allowing a nucleophilic attack on the C1' of the ribose to form the product. After dissociation, two additional enzymatic reactions on the tRNA convert PreQ1 to queuine (Q), resulting in the hypermodified nucleoside queuosine (7-(((4,5-cis-dihydroxy-2-cyclopenten-1-yl)amino)methyl)-7-deazaguanosine). The chain is Queuine tRNA-ribosyltransferase from Novosphingobium aromaticivorans (strain ATCC 700278 / DSM 12444 / CCUG 56034 / CIP 105152 / NBRC 16084 / F199).